A 386-amino-acid polypeptide reads, in one-letter code: uncharacterized protein (386 aa).

9 consecutive transmembrane segments (helical) span residues 48–68 (NLIT…MLVY), 78–98 (PSWV…FDAI), 136–156 (LQLD…YFYI), 171–191 (YFSG…LTAI), 213–233 (FLPY…ALLL), 253–273 (VIKA…VFSL), 285–305 (FLTI…VVIV), 316–336 (WNVL…FGVL), and 344–364 (FFCY…HVIA).

This sequence belongs to the CDP-alcohol phosphatidyltransferase class-I family.

The protein localises to the membrane. This is an uncharacterized protein from Schizosaccharomyces pombe (strain 972 / ATCC 24843) (Fission yeast).